A 182-amino-acid chain; its full sequence is Phospholipase A2 inhibitor gamma subunit A (182 aa).

Disulfide bonds link Cys3-Cys27, Cys6-Cys13, Cys20-Cys48, Cys54-Cys75, Cys76-Cys81, Cys99-Cys124, Cys117-Cys146, and Cys150-Cys172. N-linked (GlcNAc...) asparagine glycosylation occurs at Asn157.

This sequence belongs to the CNF-like-inhibitor family. As to quaternary structure, heterotrimer of 2 subunits A and 1 subunit B. Post-translationally, N-glycosylation is not important for activity, since deglycosylation does not change its PLA2 inhibitory activity. In terms of tissue distribution, expressed by the liver.

The protein localises to the secreted. Strongly inhibits its own venom PLA2 and all other PLA2s tested including Elapid, Crotalid and Viperid venom PLA2s, as well as honeybee PLA2s. The chain is Phospholipase A2 inhibitor gamma subunit A from Laticauda semifasciata (Black-banded sea krait).